Here is a 279-residue protein sequence, read N- to C-terminus: 30 kDa ribonucleoprotein, chloroplastic (279 aa).

Positions 87–165 (LKIFVGNLLF…RALRVNSGPP (79 aa)) constitute an RRM 1 domain. The segment at 156 to 187 (RALRVNSGPPPEKRENSSFRENSSFRGGSRGG) is disordered. The tract at residues 166–193 (PEKRENSSFRENSSFRGGSRGGGSFDSS) is linker (Gly-rich). Positions 194-272 (NRVYVGNLAW…RAIRVSPAEA (79 aa)) constitute an RRM 2 domain.

As to expression, expressed at high levels in the leaves and seedlings, and lower levels are seen in the stems and roots.

It is found in the plastid. The protein localises to the chloroplast. Could be involved in splicing and/or processing of chloroplast RNA's. The polypeptide is 30 kDa ribonucleoprotein, chloroplastic (Nicotiana plumbaginifolia (Leadwort-leaved tobacco)).